Consider the following 191-residue polypeptide: Probable protein adenylyltransferase HI_0977 (191 aa).

The 126-residue stretch at 37-162 (GSTKGLQQIH…NDLEIRFLLQ (126 aa)) folds into the Fido domain. Residues 67–68 (KG), 112–114 (GNG), Arg118, and Gln145 each bind ATP.

This sequence belongs to the fic family.

It carries out the reaction L-tyrosyl-[protein] + ATP = O-(5'-adenylyl)-L-tyrosyl-[protein] + diphosphate. The catalysed reaction is L-threonyl-[protein] + ATP = 3-O-(5'-adenylyl)-L-threonyl-[protein] + diphosphate. Its function is as follows. Probable adenylyltransferase that mediates the addition of adenosine 5'-monophosphate (AMP) to specific residues of target proteins. The chain is Probable protein adenylyltransferase HI_0977 from Haemophilus influenzae (strain ATCC 51907 / DSM 11121 / KW20 / Rd).